The sequence spans 211 residues: Thymidylate kinase (211 aa).

ATP is bound at residue Gly-10–Thr-17.

The protein belongs to the thymidylate kinase family.

It carries out the reaction dTMP + ATP = dTDP + ADP. Phosphorylation of dTMP to form dTDP in both de novo and salvage pathways of dTTP synthesis. This is Thymidylate kinase (tmk) from Lactococcus lactis subsp. lactis (strain IL1403) (Streptococcus lactis).